A 324-amino-acid chain; its full sequence is Probable tRNA pseudouridine synthase B (324 aa).

The active-site Nucleophile is the aspartate 72. The 76-residue stretch at 239–314 folds into the PUA domain; that stretch reads LPRVVILDSA…LVIETRKVFM (76 aa).

Belongs to the pseudouridine synthase TruB family. Type 2 subfamily.

The enzyme catalyses uridine(55) in tRNA = pseudouridine(55) in tRNA. Its function is as follows. Could be responsible for synthesis of pseudouridine from uracil-55 in the psi GC loop of transfer RNAs. The chain is Probable tRNA pseudouridine synthase B from Methanothermobacter thermautotrophicus (strain ATCC 29096 / DSM 1053 / JCM 10044 / NBRC 100330 / Delta H) (Methanobacterium thermoautotrophicum).